Here is a 904-residue protein sequence, read N- to C-terminus: Translation initiation factor IF-2 (904 aa).

Disordered stretches follow at residues 102–122 (TYVKSENEGGGRAAPMTPDEE), 134–252 (RQRN…MVAG), and 267–316 (HLSA…ERPT). A compositionally biased stretch (basic and acidic residues) spans 134 to 177 (RQRNLEEQQRLAESDRVRDEAIQRKREEEQAAKDRAEAERKAAE). Over residues 178–230 (EAAAAASAPAPVADAPKPSAAAPAARLPSSPSSAPRAARPAGASPASRPAAPA) the composition is skewed to low complexity. The 170-residue stretch at 403 to 572 (SRPPVVTIMG…SLQAEVLELK (170 aa)) folds into the tr-type G domain. Positions 412–419 (GHVDHGKT) are G1. A GTP-binding site is contributed by 412–419 (GHVDHGKT). The interval 437–441 (GITQH) is G2. A G3 region spans residues 458 to 461 (DTPG). GTP-binding positions include 458–462 (DTPGH) and 512–515 (NKID). Residues 512–515 (NKID) form a G4 region. The tract at residues 548–550 (SAK) is G5.

This sequence belongs to the TRAFAC class translation factor GTPase superfamily. Classic translation factor GTPase family. IF-2 subfamily.

Its subcellular location is the cytoplasm. Functionally, one of the essential components for the initiation of protein synthesis. Protects formylmethionyl-tRNA from spontaneous hydrolysis and promotes its binding to the 30S ribosomal subunits. Also involved in the hydrolysis of GTP during the formation of the 70S ribosomal complex. The sequence is that of Translation initiation factor IF-2 from Xanthomonas axonopodis pv. citri (strain 306).